Reading from the N-terminus, the 583-residue chain is COP9 signalosome complex subunit 10 (583 aa).

Residues 1-35 (MSDEEDYAEYMMSEEDMSSFEMDVDSDVEPDDAGL) show a composition bias toward acidic residues. Residues 1–55 (MSDEEDYAEYMMSEEDMSSFEMDVDSDVEPDDAGLEQDQQVTGDDYDGSAGNSGD) are disordered. Positions 297–485 (DHYNQSQMLS…DYVYFGEEYF (189 aa)) constitute a PCI domain.

As to quaternary structure, component of a COP9 signalosome-like (CSN) complex.

The protein localises to the cytoplasm. It localises to the nucleus. Component of the COP9 signalosome (CSN) complex that acts as an regulator of the ubiquitin (Ubl) conjugation pathway by mediating the deneddylation of the cullin subunit of SCF-type E3 ubiquitin-protein ligase complexes. The CSN complex is involved in the regulation of the mating pheromone response. The polypeptide is COP9 signalosome complex subunit 10 (RRI2) (Kluyveromyces lactis (strain ATCC 8585 / CBS 2359 / DSM 70799 / NBRC 1267 / NRRL Y-1140 / WM37) (Yeast)).